A 355-amino-acid polypeptide reads, in one-letter code: Ribosomal RNA large subunit methyltransferase M (355 aa).

S-adenosyl-L-methionine contacts are provided by residues serine 191, 224-227, aspartate 243, aspartate 263, and aspartate 279; that span reads APGG. The active-site Proton acceptor is lysine 308.

The protein belongs to the class I-like SAM-binding methyltransferase superfamily. RNA methyltransferase RlmE family. RlmM subfamily. Monomer.

Its subcellular location is the cytoplasm. The enzyme catalyses cytidine(2498) in 23S rRNA + S-adenosyl-L-methionine = 2'-O-methylcytidine(2498) in 23S rRNA + S-adenosyl-L-homocysteine + H(+). In terms of biological role, catalyzes the 2'-O-methylation at nucleotide C2498 in 23S rRNA. The protein is Ribosomal RNA large subunit methyltransferase M of Stenotrophomonas maltophilia (strain R551-3).